We begin with the raw amino-acid sequence, 244 residues long: 5-oxoprolinase subunit A (244 aa).

This sequence belongs to the LamB/PxpA family. As to quaternary structure, forms a complex composed of PxpA, PxpB and PxpC.

It catalyses the reaction 5-oxo-L-proline + ATP + 2 H2O = L-glutamate + ADP + phosphate + H(+). Catalyzes the cleavage of 5-oxoproline to form L-glutamate coupled to the hydrolysis of ATP to ADP and inorganic phosphate. The polypeptide is 5-oxoprolinase subunit A (Salmonella heidelberg (strain SL476)).